A 617-amino-acid polypeptide reads, in one-letter code: uncharacterized protein (617 aa).

Residues 103–123 (AGVLLAKFFPLLFLYPLTYLA) form a helical membrane-spanning segment. Residues 200–609 (FETREPVGSG…DILEAAKPFL (410 aa)) form the Protein kinase domain. Residues 206 to 214 (VGSGCVAQV) and K302 contribute to the ATP site. The active-site Proton acceptor is D436.

This sequence belongs to the protein kinase superfamily. ADCK protein kinase family.

The protein resides in the mitochondrion. It is found in the membrane. In terms of biological role, the function of this protein is not yet clear. It is not known if it has protein kinase activity and what type of substrate it would phosphorylate (Ser, Thr or Tyr). Involved in the mitochondrial import of CoQ precursors, plays a role in muscle mitochondrial function and fatty acid beta-oxidation. This is an uncharacterized protein from Mus musculus (Mouse).